A 105-amino-acid chain; its full sequence is Spermatogenesis-associated protein 8 (105 aa).

Expressed at high levels in adult testis, at moderate levels in sperm and at low levels in fetal testis. Not detected in other tissues.

In Homo sapiens (Human), this protein is Spermatogenesis-associated protein 8 (SPATA8).